Consider the following 500-residue polypeptide: Probable malate:quinone oxidoreductase (500 aa).

This sequence belongs to the MQO family. The cofactor is FAD.

The enzyme catalyses (S)-malate + a quinone = a quinol + oxaloacetate. It functions in the pathway carbohydrate metabolism; tricarboxylic acid cycle; oxaloacetate from (S)-malate (quinone route): step 1/1. This is Probable malate:quinone oxidoreductase from Prochlorococcus marinus (strain MIT 9211).